Here is a 323-residue protein sequence, read N- to C-terminus: Beta-ketoacyl-[acyl-carrier-protein] synthase III (323 aa).

Residues Cys-114 and His-250 contribute to the active site. The ACP-binding stretch occupies residues 251–255 (QANLR). Asn-280 is an active-site residue.

Belongs to the thiolase-like superfamily. FabH family. Homodimer.

The protein resides in the cytoplasm. It catalyses the reaction malonyl-[ACP] + acetyl-CoA + H(+) = 3-oxobutanoyl-[ACP] + CO2 + CoA. Its pathway is lipid metabolism; fatty acid biosynthesis. Catalyzes the condensation reaction of fatty acid synthesis by the addition to an acyl acceptor of two carbons from malonyl-ACP. Catalyzes the first condensation reaction which initiates fatty acid synthesis and may therefore play a role in governing the total rate of fatty acid production. Possesses both acetoacetyl-ACP synthase and acetyl transacylase activities. Its substrate specificity determines the biosynthesis of branched-chain and/or straight-chain of fatty acids. This chain is Beta-ketoacyl-[acyl-carrier-protein] synthase III, found in Cereibacter sphaeroides (strain ATCC 17029 / ATH 2.4.9) (Rhodobacter sphaeroides).